Consider the following 165-residue polypeptide: Peptidyl-prolyl cis-trans isomerase-like 1 (165 aa).

Positions 3–157 constitute a PPIase cyclophilin-type domain; the sequence is EREEVILDTS…IVQKILYALN (155 aa).

This sequence belongs to the cyclophilin-type PPIase family. PPIL1 subfamily.

It carries out the reaction [protein]-peptidylproline (omega=180) = [protein]-peptidylproline (omega=0). In terms of biological role, PPIases accelerate the folding of proteins. It catalyzes the cis-trans isomerization of proline imidic peptide bonds in oligopeptides. The protein is Peptidyl-prolyl cis-trans isomerase-like 1 (cyp3) of Rhizopus delemar (strain RA 99-880 / ATCC MYA-4621 / FGSC 9543 / NRRL 43880) (Mucormycosis agent).